The sequence spans 179 residues: Large ribosomal subunit protein uL5 (179 aa).

This sequence belongs to the universal ribosomal protein uL5 family. Part of the 50S ribosomal subunit; part of the 5S rRNA/L5/L18/L25 subcomplex. Contacts the 5S rRNA and the P site tRNA. Forms a bridge to the 30S subunit in the 70S ribosome.

Its function is as follows. This is one of the proteins that bind and probably mediate the attachment of the 5S RNA into the large ribosomal subunit, where it forms part of the central protuberance. In the 70S ribosome it contacts protein S13 of the 30S subunit (bridge B1b), connecting the 2 subunits; this bridge is implicated in subunit movement. Contacts the P site tRNA; the 5S rRNA and some of its associated proteins might help stabilize positioning of ribosome-bound tRNAs. This chain is Large ribosomal subunit protein uL5, found in Microcystis aeruginosa (strain NIES-843 / IAM M-2473).